An 89-amino-acid polypeptide reads, in one-letter code: Small ribosomal subunit protein uS15 (89 aa).

The protein belongs to the universal ribosomal protein uS15 family. Part of the 30S ribosomal subunit. Forms a bridge to the 50S subunit in the 70S ribosome, contacting the 23S rRNA.

One of the primary rRNA binding proteins, it binds directly to 16S rRNA where it helps nucleate assembly of the platform of the 30S subunit by binding and bridging several RNA helices of the 16S rRNA. Functionally, forms an intersubunit bridge (bridge B4) with the 23S rRNA of the 50S subunit in the ribosome. The chain is Small ribosomal subunit protein uS15 from Prochlorococcus marinus (strain MIT 9515).